The chain runs to 1396 residues: MASDSAGATISGNFSNSDNSETLNLNTTKLYSSAISSISPQFPSPKPTSSCPSIPNSKRIPNTNFIVDLFRLPHQSSSVAFFLSHFHSDHYSGLSSSWSKGIIYCSHKTARLVAEILQVPSQFVFALPMNQMVKIDGSEVVLIEANHCPGAVQFLFKVKLESSGFEKYVHTGDFRFCDEMRFDPFLNGFVGCDGVFLDTTYCNPKFVFPSQEESVGYVVSVIDKISEEKVLFLVATYVVGKEKILVEIARRCKRKIVVDARKMSMLSVLGCGEEGMFTEDENESDVHVVGWNVLGETWPYFRPNFVKMNEIMVEKGYDKVVGFVPTGWTYEVKRNKFAVRFKDSMEIHLVPYSEHSNYDELREFIKFLKPKRVIPTVGVDIEKFDCKEVNKMQKHFSGLVDEMANKKDFLLGFYRQSYQKNEKSDVDVVSHSAEVYEEEEKNACEDGGENVPSSRGPILHDTTPSSDSRLLIKLRDSLPAWVTEEQMLDLIKKHAGNPVDIVSNFYEYEAELYKQASLPTPSLNNQAVLFDDDVTDLQPNPVKGICPDVQAIQKGFDLPRKMNLTKGTISPGKRGKSSGSKSNKKAKKDPKSKPVGPGQPTLFKFFNKVLDGGSNSVSVGSETEECNTDKKMVHIDASEAYKEVTDQFIDIVNGSESLRDYAASIIDEAKGDISRALNIYYSKPREIPGDHAGERGLSSKTIQYPKCSEACSSQEDKKASENSGHAVNICVQTSAEESVDKNYVSLPPEKYQPKEHACWREGQPAPYIHLVRTFASVESEKGKIKAMSMLCNMFRSLFALSPEDVLPAVYLCTNKIAADHENIELNIGGSLISSALEEACGISRSTVRDMYNSLGDLGDVAQLCRQTQKLLVPPPPLLVRDVFSTLRKISVQTGTGSTRLKKNLIVKLMRSCREKEIKFLVRTLARNLRIGAMLRTVLPALGRAIVMNSFWNDHNKELSESCFREKLEGVSAAVVEAYNILPSLDVVVPSLMDKDIEFSTSTLSMVPGIPIKPMLAKIAKGVQEFFNLSQEKAFTCEYKYDGQRAQIHKLLDGTVCIFSRNGDETTSRFPDLVDVIKQFSCPAAETFMLDAEVVATDRINGNKLMSFQELSTRERGSKDALITTESIKVEVCVFVFDIMFVNGEQLLALPLRERRRRLKEVFPETRPGYLEYAKEITVGAEEASLNNHDTLSRINAFLEEAFQSSCEGIMVKSLDVNAGYCPTKRSDSWLKVKRDYVDGLGDTLDLVPIGAWYGNGRKAGWYSPFLMACFNPETEEFQSVCRVMSGFSDAFYIEMKEFYSEDKILAKKPPYYRTGETPDMWFSAEVVWEIRGADFTVSPVHSASLGLVHPSRGISVRFPRFISKVTDRNPEECSTATDIAEMFHAQTRKMNITSQH.

Disordered stretches follow at residues 441-464 and 562-599; these read KNAC…DTTP and MNLT…GPGQ. Short sequence motifs (nuclear localization signal) lie at residues 572-579 and 886-893; these read GKRGKSSG and LRKISVQT. ATP is bound at residue Glu-1037. Residue Lys-1039 is the N6-AMP-lysine intermediate of the active site. The ATP site is built by Arg-1044, Arg-1060, Glu-1092, and Phe-1136. Residue Glu-1092 participates in Mg(2+) binding. A Mg(2+)-binding site is contributed by Glu-1207. ATP contacts are provided by Lys-1212, Arg-1225, and Lys-1231.

Belongs to the ATP-dependent DNA ligase family. Requires Mg(2+) as cofactor. In terms of tissue distribution, mostly expressed in buds and flowers, and, to a lower extent, in stems, leaves, siliques and seeds.

Its subcellular location is the nucleus. The enzyme catalyses ATP + (deoxyribonucleotide)n-3'-hydroxyl + 5'-phospho-(deoxyribonucleotide)m = (deoxyribonucleotide)n+m + AMP + diphosphate.. Its function is as follows. DNA ligase that seals nicks in double-stranded DNA during DNA replication, DNA recombination and DNA repair. Required to maintain seed viability (e.g. longevity and storability) and during seed germination, probably by repairing DNA damage accumulated during seed development, storage and/or imbibition. Facilitates seed germination in cold conditions (2 degrees Celsius) and under oxidative stress (e.g. menadione, a genotoxic agent). Involved in repair of X-ray-induced damage. Functionally, limits stable root transformation by A.tumefaciens T-DNA. The sequence is that of DNA ligase 6 from Arabidopsis thaliana (Mouse-ear cress).